Reading from the N-terminus, the 346-residue chain is tRNA N6-adenosine threonylcarbamoyltransferase (346 aa).

Residues H111 and H115 each contribute to the Fe cation site. Substrate is bound by residues 134–138 (LVSGG), D167, G180, and N279. Position 307 (D307) interacts with Fe cation.

The protein belongs to the KAE1 / TsaD family. It depends on Fe(2+) as a cofactor.

It localises to the cytoplasm. It catalyses the reaction L-threonylcarbamoyladenylate + adenosine(37) in tRNA = N(6)-L-threonylcarbamoyladenosine(37) in tRNA + AMP + H(+). Its function is as follows. Required for the formation of a threonylcarbamoyl group on adenosine at position 37 (t(6)A37) in tRNAs that read codons beginning with adenine. Is involved in the transfer of the threonylcarbamoyl moiety of threonylcarbamoyl-AMP (TC-AMP) to the N6 group of A37, together with TsaE and TsaB. TsaD likely plays a direct catalytic role in this reaction. The protein is tRNA N6-adenosine threonylcarbamoyltransferase of Burkholderia multivorans (strain ATCC 17616 / 249).